A 282-amino-acid chain; its full sequence is Formamidopyrimidine-DNA glycosylase (282 aa).

Pro2 serves as the catalytic Schiff-base intermediate with DNA. Catalysis depends on Glu3, which acts as the Proton donor. Lys61 (proton donor; for beta-elimination activity) is an active-site residue. DNA is bound by residues His93, Arg112, and Lys158. The FPG-type zinc-finger motif lies at 244–278; the sequence is DAYGREGEPCRRCGAIMRRDKFMNRSSFYCPRCQP. Catalysis depends on Arg268, which acts as the Proton donor; for delta-elimination activity.

This sequence belongs to the FPG family. As to quaternary structure, monomer. The cofactor is Zn(2+).

It catalyses the reaction Hydrolysis of DNA containing ring-opened 7-methylguanine residues, releasing 2,6-diamino-4-hydroxy-5-(N-methyl)formamidopyrimidine.. The catalysed reaction is 2'-deoxyribonucleotide-(2'-deoxyribose 5'-phosphate)-2'-deoxyribonucleotide-DNA = a 3'-end 2'-deoxyribonucleotide-(2,3-dehydro-2,3-deoxyribose 5'-phosphate)-DNA + a 5'-end 5'-phospho-2'-deoxyribonucleoside-DNA + H(+). Its function is as follows. Involved in base excision repair of DNA damaged by oxidation or by mutagenic agents. Acts as a DNA glycosylase that recognizes and removes damaged bases. Has a preference for oxidized purines, such as 7,8-dihydro-8-oxoguanine (8-oxoG). Has AP (apurinic/apyrimidinic) lyase activity and introduces nicks in the DNA strand. Cleaves the DNA backbone by beta-delta elimination to generate a single-strand break at the site of the removed base with both 3'- and 5'-phosphates. The sequence is that of Formamidopyrimidine-DNA glycosylase from Mycolicibacterium gilvum (strain PYR-GCK) (Mycobacterium gilvum (strain PYR-GCK)).